An 8797-amino-acid polypeptide reads, in one-letter code: Nesprin-1 (8797 aa).

The actin-binding stretch occupies residues 1–289 (MATSRGASRC…KHYPDIHNAS (289 aa)). Over 1–8746 (MATSRGASRC…GRGFLFRVLR (8746 aa)) the chain is Cytoplasmic. 2 consecutive Calponin-homology (CH) domains span residues 27-134 (IVQK…LYFQ) and 178-283 (GNAK…KHYP). 52 Spectrin repeats span residues 314 to 397 (REDR…SRLF), 398 to 502 (DWHI…HLMK), 503 to 609 (MEFL…SMLE), 610 to 703 (EVIS…YAQA), 704 to 815 (DEMD…QLLI), 816 to 923 (PLEE…KHVE), 924 to 1024 (TNSR…HLKI), 1025 to 1122 (DVEK…LMED), 1123 to 1246 (PDKW…NSLE), 1247 to 1335 (ELIS…ERRI), 1336 to 1444 (QVTL…MEMV), 1445 to 1550 (KTKW…ILGH), 1551 to 1653 (LSQQ…LENL), 1654 to 1763 (LAHW…LQSV), 1764 to 1879 (VAEH…SHAS), 1880 to 1976 (LSGI…ADAL), 1977 to 2081 (AVLK…QGQC), 2082 to 2195 (CGLI…LRVS), 2196 to 2303 (LSIW…KDFT), 2304 to 2401 (AQST…KTQA), 2402 to 2513 (SLQE…LQDC), 2514 to 2619 (ASEL…LRSC), 2620 to 2731 (QVAL…LESV), 2732 to 2838 (ISQW…VEEI), 2839 to 2962 (VKDH…SGQV), 2963 to 3062 (AQLE…QNKE), 3063 to 3171 (QILQ…LENL), 3172 to 3275 (KIQM…VSRL), 3276 to 3387 (DRIV…LEGA), 3388 to 3490 (LSKW…SEKL), 3491 to 3593 (VRLH…RTQF), 3594 to 3720 (NNVV…YSDW), 3721 to 3814 (YGST…LEKG), 3815 to 3920 (LHLA…LEAK), 3921 to 4028 (VKDH…QRMY), 4029 to 4139 (QSLE…KHLK), 4140 to 4235 (SELW…REED), 4236 to 4339 (LQRT…IQVS), 4340 to 4451 (VTNL…LNKA), 4452 to 4560 (LSEK…LEKN), 4561 to 4669 (LVSR…VQEA), 4670 to 4776 (ILAR…LEDT), 4777 to 4882 (TSAY…CESR), 4883 to 4991 (MVQS…LTEI), 4992 to 5099 (YSQC…LQRC), 5100 to 5209 (TAQW…LEDA), 5210 to 5318 (VDEW…GKLV), 5319 to 5424 (KQEL…EQSK), 5425 to 5522 (ATSQ…LSKL), 5523 to 5630 (NQAA…LQDA), 5631 to 5736 (AKDM…MQEA), and 5737 to 5842 (VVQY…PSAH). A coiled-coil region spans residues 314 to 8666 (REDRVIFKEM…EKLLDVSSSQ (8353 aa)). A Phosphoserine modification is found at Ser732. Thr2270 carries the post-translational modification Phosphothreonine. Ser5657 bears the Phosphoserine mark. Residues 5859–5886 (PVTEESGEEGTNSEISSPPACRSPSPVA) are disordered. Spectrin repeat units lie at residues 5962–6071 (LERQ…LEEK), 6072–6178 (LNDQ…SLLE), 6374–6485 (RQSI…RLQQ), 6486–6581 (ILNF…RSGL), 6582–6691 (NQNL…LETW), 6692–6795 (SHLD…TILK), 6796–6902 (HWTR…QEKL), 6903–7020 (HQLQ…LEGL), 7021–7128 (LESW…LKSV), 7129–7237 (LDQW…SKAL), 7238–7350 (LQLW…LQAG), 7351–7454 (VLDY…LQSF), 7455–7558 (LLQH…RGII), 7559–7671 (DSQI…LAFL), 7672–7783 (LKDW…NEWA), 7784–7883 (VFSE…LKET), 7884–7997 (LVAV…IEET), 7998–8106 (WRLW…LKHF), and 8107–8216 (IGQR…LPLP). Phosphoserine is present on Ser8223. Residues 8246–8279 (DSLLSPQPSSNLSLSLAQPLRSERSGRDTPASVD) form a disordered region. Over residues 8247–8265 (SLLSPQPSSNLSLSLAQPL) the composition is skewed to low complexity. Position 8274 is a phosphothreonine (Thr8274). Phosphoserine occurs at positions 8277, 8280, and 8305. Spectrin repeat units lie at residues 8329-8438 (SALE…MKQN), 8439-8548 (LQKW…LQDA), and 8549-8666 (LMQC…SSSQ). A Phosphothreonine modification is found at Thr8360. The segment at 8671 to 8734 (SWSSADELDT…DSSLSEPGPG (64 aa)) is disordered. 2 stretches are compositionally biased toward polar residues: residues 8680-8696 (TSGS…PNRQ) and 8704-8729 (SLSQ…SSLS). Residues 8738-8797 (RGFLFRVLRAALPLQLLLLLLIGLACLVPMSEEDYSCALSNNFARSFHPMLRYTNGPPPL) form the KASH domain. A helical; Anchor for type IV membrane protein transmembrane segment spans residues 8747-8767 (AALPLQLLLLLLIGLACLVPM). The Perinuclear space segment spans residues 8768 to 8797 (SEEDYSCALSNNFARSFHPMLRYTNGPPPL).

Belongs to the nesprin family. As to quaternary structure, core component of LINC complexes which are composed of inner nuclear membrane SUN domain-containing proteins coupled to outer nuclear membrane KASH domain-containing nesprins. SUN and KASH domain-containing proteins seem to bind each other promiscuously; however, differentially expression of LINC complex constituents can give rise to specific assemblies. At least SUN1/2-containing core LINC complexes are proposed to be hexameric composed of three protomers of each KASH and SUN domain-containing protein. The SUN2:SYNE1/KASH1 LINC complex is a heterohexamer; the homotrimeric cloverleave-like conformation of the SUN domain is a prerequisite for LINC complex formation in which three separate SYNE1/KASH1 peptides bind at the interface of adjacent SUN domains. Self-associates. Interacts with SYNE3. Interacts with SPAG4/SUN4. May interact with MUSK. Interacts with F-actin via its N-terminal domain. Interacts with EMD and LMNA in vitro. Interacts (via KASH domain) with TMEM258. The disulfid bond with SUN1 or SUN2 is required for stability of the respective LINC complex under tensile forces. As to expression, expressed in HeLa, A431, A172 and HaCaT cells (at protein level). Widely expressed. Highly expressed in skeletal and smooth muscles, heart, spleen, peripheral blood leukocytes, pancreas, cerebellum, stomach, kidney and placenta. Isoform GSRP-56 is predominantly expressed in heart and skeletal muscle (at protein level).

It is found in the nucleus outer membrane. It localises to the nucleus. The protein resides in the nucleus envelope. The protein localises to the cytoplasm. Its subcellular location is the cytoskeleton. It is found in the myofibril. It localises to the sarcomere. The protein resides in the golgi apparatus. Functionally, multi-isomeric modular protein which forms a linking network between organelles and the actin cytoskeleton to maintain the subcellular spatial organization. As a component of the LINC (LInker of Nucleoskeleton and Cytoskeleton) complex involved in the connection between the nuclear lamina and the cytoskeleton. The nucleocytoplasmic interactions established by the LINC complex play an important role in the transmission of mechanical forces across the nuclear envelope and in nuclear movement and positioning. May be involved in nucleus-centrosome attachment and nuclear migration in neural progenitors implicating LINC complex association with SUN1/2 and probably association with cytoplasmic dynein-dynactin motor complexes; SYNE1 and SYNE2 may act redundantly. Required for centrosome migration to the apical cell surface during early ciliogenesis. May be involved in nuclear remodeling during sperm head formation in spermatogenesis; a probable SUN3:SYNE1/KASH1 LINC complex may tether spermatid nuclei to posterior cytoskeletal structures such as the manchette. In Homo sapiens (Human), this protein is Nesprin-1.